The following is a 204-amino-acid chain: bMERB domain-containing protein 1 (204 aa).

Residues Leu-3–Asp-150 form the bMERB domain. The interval Val-162–Thr-187 is disordered.

This is bMERB domain-containing protein 1 (BMERB1) from Pongo abelii (Sumatran orangutan).